A 428-amino-acid polypeptide reads, in one-letter code: D-inositol 3-phosphate glycosyltransferase (428 aa).

His5 contributes to the 1D-myo-inositol 3-phosphate binding site. Residues 11 to 12 (QP) and Gly19 each bind UDP-N-acetyl-alpha-D-glucosamine. Residues 16–21 (DAGGMN), Lys74, Tyr107, Thr131, and Arg151 contribute to the 1D-myo-inositol 3-phosphate site. Residues Arg225, Lys230, and Gln283 each coordinate UDP-N-acetyl-alpha-D-glucosamine. Phe292, Gln293, and Ala295 together coordinate Mg(2+). 2 residues coordinate UDP-N-acetyl-alpha-D-glucosamine: Glu305 and Glu313. A Mg(2+)-binding site is contributed by Thr319.

It belongs to the glycosyltransferase group 1 family. MshA subfamily. Homodimer.

It carries out the reaction 1D-myo-inositol 3-phosphate + UDP-N-acetyl-alpha-D-glucosamine = 1D-myo-inositol 2-acetamido-2-deoxy-alpha-D-glucopyranoside 3-phosphate + UDP + H(+). Its function is as follows. Catalyzes the transfer of a N-acetyl-glucosamine moiety to 1D-myo-inositol 3-phosphate to produce 1D-myo-inositol 2-acetamido-2-deoxy-glucopyranoside 3-phosphate in the mycothiol biosynthesis pathway. This chain is D-inositol 3-phosphate glycosyltransferase, found in Mycobacterium leprae (strain Br4923).